We begin with the raw amino-acid sequence, 931 residues long: Phosphoenolpyruvate carboxylase (931 aa).

Residues histidine 138 and lysine 594 contribute to the active site.

The protein belongs to the PEPCase type 1 family. The cofactor is Mg(2+).

The catalysed reaction is oxaloacetate + phosphate = phosphoenolpyruvate + hydrogencarbonate. Forms oxaloacetate, a four-carbon dicarboxylic acid source for the tricarboxylic acid cycle. This Streptococcus agalactiae serotype III (strain NEM316) protein is Phosphoenolpyruvate carboxylase.